The following is a 127-amino-acid chain: Protein ApaG (127 aa).

The ApaG domain maps to 3–127 (DDPRYRVEVE…FVLSVPRTLH (125 aa)).

This is Protein ApaG from Xanthomonas axonopodis pv. citri (strain 306).